Reading from the N-terminus, the 388-residue chain is Probable peptidoglycan glycosyltransferase FtsW (388 aa).

Residues 1–19 are Cytoplasmic-facing; that stretch reads MSAAAPKPRPAHRFHIDQT. The helical transmembrane segment at 20-40 threads the bilayer; it reads LLSVCLCLLGIGFVMVASSSM. Over 41 to 57 the chain is Periplasmic; it reads HLGVKMADDVSYYPFKQ. Residues 58–78 traverse the membrane as a helical segment; the sequence is LVHIILGLMFAAAILAIPMKY. Residues 79–85 are Cytoplasmic-facing; it reads WQKIGQP. The chain crosses the membrane as a helical span at residues 86–106; the sequence is LFIVGLVLLLVVLIPGVGVKV. Over 107-117 the chain is Periplasmic; the sequence is NGSTRWLSLLG. The chain crosses the membrane as a helical span at residues 118-137; it reads LRIQVSEVMKFISVVYMAGY. The Cytoplasmic segment spans residues 138–147; that stretch reads ITRHSDHVRH. Residues 148–168 form a helical membrane-spanning segment; that stretch reads SIFGLLRPLMLLSVASILLLL. The Periplasmic portion of the chain corresponds to 169 to 170; that stretch reads EP. A helical transmembrane segment spans residues 171 to 191; it reads DFGSAVVILIIAMGMMFLGGA. A topological domain (cytoplasmic) is located at residue Arg192. Residues 193-213 form a helical membrane-spanning segment; the sequence is LSPFVALVALISSAGAILASS. The Periplasmic portion of the chain corresponds to 214–271; sequence ADYRVKRMTSFLNPWEHARDSGYQLTQALISFGRGEVSGVGLGNGLQKLFYLPEAHTD. A helical membrane pass occupies residues 272-292; sequence FLFSVLGEELGLVGVTLVIAL. At 293-315 the chain is on the cytoplasmic side; the sequence is FTTLVVRGFSIGEQAEAAGERFS. Residues 316 to 336 traverse the membrane as a helical segment; it reads ALVAYGLVIWFGFQAFVNMGV. The Periplasmic portion of the chain corresponds to 337–348; that stretch reads NMGILPTKGLTL. A helical transmembrane segment spans residues 349-369; it reads PLMSYGGGSMIVMCGAMAVLF. Over 370–388 the chain is Cytoplasmic; that stretch reads RIHYEVTELHKSNIKGKSR.

It belongs to the SEDS family. FtsW subfamily.

Its subcellular location is the cell inner membrane. It catalyses the reaction [GlcNAc-(1-&gt;4)-Mur2Ac(oyl-L-Ala-gamma-D-Glu-L-Lys-D-Ala-D-Ala)](n)-di-trans,octa-cis-undecaprenyl diphosphate + beta-D-GlcNAc-(1-&gt;4)-Mur2Ac(oyl-L-Ala-gamma-D-Glu-L-Lys-D-Ala-D-Ala)-di-trans,octa-cis-undecaprenyl diphosphate = [GlcNAc-(1-&gt;4)-Mur2Ac(oyl-L-Ala-gamma-D-Glu-L-Lys-D-Ala-D-Ala)](n+1)-di-trans,octa-cis-undecaprenyl diphosphate + di-trans,octa-cis-undecaprenyl diphosphate + H(+). It participates in cell wall biogenesis; peptidoglycan biosynthesis. In terms of biological role, peptidoglycan polymerase that is essential for cell division. This Methylomonas methanica (strain DSM 25384 / MC09) protein is Probable peptidoglycan glycosyltransferase FtsW.